We begin with the raw amino-acid sequence, 628 residues long: Carbon monoxide dehydrogenase 1 (628 aa).

[4Fe-4S] cluster is bound by residues C44, C52, C53, C56, C61, and C75. 6 residues coordinate [Ni-4Fe-5S] cluster: H266, C302, C340, C448, C478, and C519.

The protein belongs to the Ni-containing carbon monoxide dehydrogenase family. In terms of assembly, homodimer. [4Fe-4S] cluster is required as a cofactor. The cofactor is [Ni-4Fe-5S] cluster.

It carries out the reaction CO + 2 oxidized [2Fe-2S]-[ferredoxin] + H2O = 2 reduced [2Fe-2S]-[ferredoxin] + CO2 + 2 H(+). In terms of biological role, CODH oxidizes carbon monoxide coupled, via CooF, to the reduction of a hydrogen cation by a hydrogenase (possibly CooH). The polypeptide is Carbon monoxide dehydrogenase 1 (cooS1) (Methanosarcina mazei (strain ATCC BAA-159 / DSM 3647 / Goe1 / Go1 / JCM 11833 / OCM 88) (Methanosarcina frisia)).